Consider the following 130-residue polypeptide: MAQVQYYGTGRRKSSVARVRLVSGEGRVIINGRDFENYIPFAALREVVKQPLVATETLGNYDVLVNVNGGGYTGQAGAIRHGISRALLKADPEYRLTLKRAGLLTRDARMKERKKYGLKGARRAPQFSKR.

The protein belongs to the universal ribosomal protein uS9 family.

The polypeptide is Small ribosomal subunit protein uS9 (Bacillus anthracis (strain A0248)).